The following is a 557-amino-acid chain: Glutamyl-tRNA(Gln) amidotransferase subunit B, mitochondrial (557 aa).

The transit peptide at Met1–Gly41 directs the protein to the mitochondrion. A disordered region spans residues His26–Val45. Polar residues predominate over residues Thr32–Val45. N6-succinyllysine is present on Lys529.

Belongs to the GatB/GatE family. GatB subfamily. Subunit of the heterotrimeric GatCAB amidotransferase (AdT) complex, composed of A (QRSL1), B (GATB) and C (GATC) subunits. As to expression, predominantly expressed in tissues characterized by high rates of oxidative phosphorylation (OxPhos), including muscle and heart.

Its subcellular location is the mitochondrion. The catalysed reaction is L-glutamyl-tRNA(Gln) + L-glutamine + ATP + H2O = L-glutaminyl-tRNA(Gln) + L-glutamate + ADP + phosphate + H(+). Its function is as follows. Allows the formation of correctly charged Gln-tRNA(Gln) through the transamidation of misacylated Glu-tRNA(Gln) in the mitochondria. The reaction takes place in the presence of glutamine and ATP through an activated gamma-phospho-Glu-tRNA(Gln). The sequence is that of Glutamyl-tRNA(Gln) amidotransferase subunit B, mitochondrial from Homo sapiens (Human).